A 174-amino-acid polypeptide reads, in one-letter code: Endoribonuclease YbeY (174 aa).

Zn(2+) contacts are provided by His129, His133, and His139.

The protein belongs to the endoribonuclease YbeY family. It depends on Zn(2+) as a cofactor.

The protein resides in the cytoplasm. In terms of biological role, single strand-specific metallo-endoribonuclease involved in late-stage 70S ribosome quality control and in maturation of the 3' terminus of the 16S rRNA. The polypeptide is Endoribonuclease YbeY (Lactobacillus delbrueckii subsp. bulgaricus (strain ATCC BAA-365 / Lb-18)).